A 215-amino-acid chain; its full sequence is Wtf element wtf7 (215 aa).

Residues 1 to 21 (MSGSYAPIEDSADELSVHSGN) form a disordered region. Transmembrane regions (helical) follow at residues 119-139 (LAQSLFLLLPFNFIFFACLFF), 149-169 (LMGWILFGIWCLTCFLSSFIL), and 189-209 (LILFGLLFPGIVTMVVFYALY).

The protein belongs to the WTF family.

The protein resides in the spore membrane. Its function is as follows. May act in meiotic drive. The protein is Wtf element wtf7 of Schizosaccharomyces pombe (strain 972 / ATCC 24843) (Fission yeast).